Reading from the N-terminus, the 324-residue chain is NADH-quinone oxidoreductase subunit H (324 aa).

A run of 8 helical transmembrane segments spans residues 11-31 (ILIT…CGAF), 81-101 (VIFT…FAIV), 114-134 (IGIL…LFAG), 154-174 (VSYE…AGSF), 186-206 (LWNV…GVAV), 237-257 (FFVG…TLFF), 264-284 (ILPP…MFIL), and 304-324 (VCLP…LYNA).

It belongs to the complex I subunit 1 family. As to quaternary structure, NDH-1 is composed of 13 different subunits. Subunits NuoA, H, J, K, L, M, N constitute the membrane sector of the complex.

It localises to the cell inner membrane. The enzyme catalyses a quinone + NADH + 5 H(+)(in) = a quinol + NAD(+) + 4 H(+)(out). NDH-1 shuttles electrons from NADH, via FMN and iron-sulfur (Fe-S) centers, to quinones in the respiratory chain. The immediate electron acceptor for the enzyme in this species is believed to be ubiquinone. Couples the redox reaction to proton translocation (for every two electrons transferred, four hydrogen ions are translocated across the cytoplasmic membrane), and thus conserves the redox energy in a proton gradient. This subunit may bind ubiquinone. This is NADH-quinone oxidoreductase subunit H from Pectobacterium carotovorum subsp. carotovorum (strain PC1).